A 411-amino-acid polypeptide reads, in one-letter code: Peptidase T (411 aa).

Histidine 78 is a Zn(2+) binding site. Residue aspartate 80 is part of the active site. Aspartate 140 contacts Zn(2+). Residue glutamate 173 is the Proton acceptor of the active site. Positions 174, 196, and 379 each coordinate Zn(2+).

Belongs to the peptidase M20B family. The cofactor is Zn(2+).

It is found in the cytoplasm. The catalysed reaction is Release of the N-terminal residue from a tripeptide.. Its function is as follows. Cleaves the N-terminal amino acid of tripeptides. The polypeptide is Peptidase T (Yersinia pseudotuberculosis serotype O:3 (strain YPIII)).